A 1626-amino-acid chain; its full sequence is Collagen alpha-1(XXII) chain (1626 aa).

A signal peptide spans 1–27 (MAGLRGNAVAGLLWMLLLWSGGGGCQA). The 176-residue stretch at 38 to 213 (DLVFLLDTSS…NAIDKIRGKL (176 aa)) folds into the VWFA domain. Residues 239–427 (GTKEITGFDL…LQRIVIYCDS (189 aa)) enclose the Laminin G-like domain. The N-linked (GlcNAc...) asparagine glycan is linked to Asn375. 16 consecutive Collagen-like domains span residues 481-520 (GEKG…GDVG), 526-565 (QGEK…PGEV), 566-625 (GMRG…PGPS), 657-708 (GEQG…GIPG), 714-773 (GPPG…PGER), 774-833 (GEDG…PGLK), 868-922 (GPKG…GAPG), 925-984 (GAPG…PGKG), 1047-1095 (AGPP…PGKP), 1118-1155 (PPGP…AGPP), 1156-1215 (GLPG…AGPP), 1249-1308 (GKPG…PGKD), 1315-1374 (GPQG…PGEK), 1387-1446 (GEPG…PGPP), 1495-1550 (SQGR…PGAP), and 1575-1604 (DGLP…PPGQ). 4 disordered regions span residues 506–1002 (PVGA…GPLG), 1019–1103 (GGQC…LLSP), 1119–1458 (PGPP…RGES), and 1491–1609 (YMKS…DPSQ). Residues 544–553 (DGSKGMRGEP) show a composition bias toward basic and acidic residues. Positions 571 to 580 (QGPPGLPGPP) are enriched in pro residues. A compositionally biased stretch (basic and acidic residues) spans 591–606 (ERGEKGTRGEKGERGL). Residues 661–670 (APGPRGHQGA) are compositionally biased toward low complexity. 2 stretches are compositionally biased toward pro residues: residues 715–728 (PPGP…PGPG) and 742–751 (KPGPPGPTGP). Composition is skewed to basic and acidic residues over residues 769-778 (EPGERGEDGL) and 815-826 (RGEKGDQGEKGE). Residues 908-939 (AHGAPGAAGNPGAPGHVGAPGPSGPPGSVGAP) are compositionally biased toward low complexity. Over residues 945–957 (PGKDGERGEKGAA) the composition is skewed to basic and acidic residues. 2 stretches are compositionally biased toward low complexity: residues 959 to 974 (EEGS…DPGA) and 1056 to 1065 (PGDKGSPGSR). Basic and acidic residues-rich tracts occupy residues 1131-1151 (KGDK…KKGE) and 1173-1185 (RGAD…KGDQ). Residues 1205-1223 (ADGIAGAAGPPGIQGSPGK) are compositionally biased toward low complexity. Residues 1241–1250 (EEGKEGRDGK) show a composition bias toward basic and acidic residues. Residues 1260–1275 (AGEPGLPGPEGARGPP) are compositionally biased toward low complexity. Over residues 1379 to 1389 (KEGVPGKPGEP) the composition is skewed to low complexity. A compositionally biased stretch (basic and acidic residues) spans 1391 to 1404 (FKGERGDPGIKGDK). Residues 1405-1414 (GPPGGKGQPG) are compositionally biased toward gly residues. Pro residues predominate over residues 1440-1449 (VGPPGPPGQP). Gly residues predominate over residues 1521–1530 (GRPGQGGLEG). Residues 1595–1604 (LPGPPGPPGQ) show a composition bias toward pro residues.

This sequence belongs to the fibril-associated collagens with interrupted helices (FACIT) family. In terms of tissue distribution, restrictive expression is observed at tissue junctions such as the myotendinous junction in skeletal and heart muscle, the articular cartilage-synovial fluid junction, or the border between the anagen hair follicle and the dermis in the skin. It is deposited in the basement membrane zone of the myotendinous junction and the hair follicle and associated with the extrafibrillar matrix in cartilage.

It is found in the secreted. The protein localises to the extracellular space. It localises to the extracellular matrix. The protein resides in the cytoplasm. Acts as a cell adhesion ligand for skin epithelial cells and fibroblasts. This chain is Collagen alpha-1(XXII) chain (COL22A1), found in Homo sapiens (Human).